Reading from the N-terminus, the 225-residue chain is Helicostatins (225 aa).

The first 18 residues, 1–18 (MLYSSLPVCFLVLGAALC), serve as a signal peptide directing secretion. A propeptide spanning residues 19-48 (APERMQNEAEPHDLQPHEAEPHSDHVAPLA) is cleaved from the precursor. Leucine amide is present on residues Leu-58, Leu-79, and Leu-90. Residues 94–127 (SVDEDQSNDEQQLTTSDLDQAALAELFDQYDDAE) constitute a propeptide that is removed on maturation. Residue Leu-137 is modified to Leucine amide. Residues 141–149 (FADDETSEE) constitute a propeptide that is removed on maturation. Leucine amide occurs at positions 159, 170, 181, 192, and 206. The interval 205-225 (GLGKRSGDDVSADDSDNYFDV) is disordered. A propeptide spanning residues 210-225 (SGDDVSADDSDNYFDV) is cleaved from the precursor. A compositionally biased stretch (acidic residues) spans 214–225 (VSADDSDNYFDV).

This sequence belongs to the allatostatin family. In terms of tissue distribution, highly expressed in the CNS and gut of larvae. Also expressed in the cells of the larval brain and ventral nerve cord and in endocrine cells of the midgut.

Its subcellular location is the secreted. Its function is as follows. May act as a neurotransmitter or neuromodulator. This is Helicostatins from Helicoverpa armigera (Cotton bollworm).